We begin with the raw amino-acid sequence, 503 residues long: Probable cytosol aminopeptidase (503 aa).

2 residues coordinate Mn(2+): lysine 270 and aspartate 275. The active site involves lysine 282. Aspartate 293, aspartate 352, and glutamate 354 together coordinate Mn(2+). The active site involves arginine 356.

The protein belongs to the peptidase M17 family. Requires Mn(2+) as cofactor.

It is found in the cytoplasm. The enzyme catalyses Release of an N-terminal amino acid, Xaa-|-Yaa-, in which Xaa is preferably Leu, but may be other amino acids including Pro although not Arg or Lys, and Yaa may be Pro. Amino acid amides and methyl esters are also readily hydrolyzed, but rates on arylamides are exceedingly low.. The catalysed reaction is Release of an N-terminal amino acid, preferentially leucine, but not glutamic or aspartic acids.. Its function is as follows. Presumably involved in the processing and regular turnover of intracellular proteins. Catalyzes the removal of unsubstituted N-terminal amino acids from various peptides. The chain is Probable cytosol aminopeptidase from Salmonella arizonae (strain ATCC BAA-731 / CDC346-86 / RSK2980).